The chain runs to 459 residues: Bifunctional protein GlmU (459 aa).

The tract at residues 1–230 is pyrophosphorylase; that stretch reads MSNRFAVILA…FDETLGVNDR (230 aa). Residues 9-12, lysine 23, glutamine 73, and 78-79 each bind UDP-N-acetyl-alpha-D-glucosamine; these read LAAG and GT. Aspartate 103 lines the Mg(2+) pocket. UDP-N-acetyl-alpha-D-glucosamine-binding residues include glycine 140, glutamate 155, asparagine 170, and asparagine 228. Mg(2+) is bound at residue asparagine 228. The tract at residues 231–251 is linker; that stretch reads VALSQAEIIMKNRINRKNMVN. An N-acetyltransferase region spans residues 252 to 459; sequence GVTIIDPSNT…VDQLLNKKKS (208 aa). Positions 333 and 351 each coordinate UDP-N-acetyl-alpha-D-glucosamine. Residue histidine 363 is the Proton acceptor of the active site. 2 residues coordinate UDP-N-acetyl-alpha-D-glucosamine: tyrosine 366 and asparagine 377. Acetyl-CoA is bound by residues 386–387, alanine 423, and arginine 440; that span reads NY.

It in the N-terminal section; belongs to the N-acetylglucosamine-1-phosphate uridyltransferase family. In the C-terminal section; belongs to the transferase hexapeptide repeat family. In terms of assembly, homotrimer. It depends on Mg(2+) as a cofactor.

It is found in the cytoplasm. The catalysed reaction is alpha-D-glucosamine 1-phosphate + acetyl-CoA = N-acetyl-alpha-D-glucosamine 1-phosphate + CoA + H(+). It carries out the reaction N-acetyl-alpha-D-glucosamine 1-phosphate + UTP + H(+) = UDP-N-acetyl-alpha-D-glucosamine + diphosphate. Its pathway is nucleotide-sugar biosynthesis; UDP-N-acetyl-alpha-D-glucosamine biosynthesis; N-acetyl-alpha-D-glucosamine 1-phosphate from alpha-D-glucosamine 6-phosphate (route II): step 2/2. It participates in nucleotide-sugar biosynthesis; UDP-N-acetyl-alpha-D-glucosamine biosynthesis; UDP-N-acetyl-alpha-D-glucosamine from N-acetyl-alpha-D-glucosamine 1-phosphate: step 1/1. It functions in the pathway bacterial outer membrane biogenesis; LPS lipid A biosynthesis. Its function is as follows. Catalyzes the last two sequential reactions in the de novo biosynthetic pathway for UDP-N-acetylglucosamine (UDP-GlcNAc). The C-terminal domain catalyzes the transfer of acetyl group from acetyl coenzyme A to glucosamine-1-phosphate (GlcN-1-P) to produce N-acetylglucosamine-1-phosphate (GlcNAc-1-P), which is converted into UDP-GlcNAc by the transfer of uridine 5-monophosphate (from uridine 5-triphosphate), a reaction catalyzed by the N-terminal domain. This Bacillus cereus (strain ZK / E33L) protein is Bifunctional protein GlmU.